Reading from the N-terminus, the 1104-residue chain is Extended synaptotagmin-1 (1104 aa).

Methionine 1 carries the post-translational modification N-acetylmethionine. Residues 1 to 38 (MERSPGEGPSPSPTDQPSAPSDPTGQPPAAHAKPDPGS) are Cytoplasmic-facing. Residues 1-47 (MERSPGEGPSPSPTDQPSAPSDPTGQPPAAHAKPDPGSGGQPAGPGA) form a disordered region. Residues 15 to 24 (DQPSAPSDPT) are compositionally biased toward polar residues. Residues 37–47 (GSGGQPAGPGA) are compositionally biased toward gly residues. A helical transmembrane segment spans residues 39 to 59 (GGQPAGPGAAGEALAVLTSFG). Residues 60 to 62 (KRL) lie on the Lumenal side of the membrane. A helical membrane pass occupies residues 63–83 (LVLIPVYLAGAVGLSVGFVLF). The Cytoplasmic segment spans residues 84–1104 (GLALYLGWRR…LMDDKDKGSS (1021 aa)). Positions 91–116 (WRRVRDEKERSLRAARQLLDDEEQLT) form a coiled coil. The 179-residue stretch at 135–313 (DVEKAEWLNK…LPNRLLVPLV (179 aa)) folds into the SMP-LTD domain. 4 C2 domains span residues 312 to 433 (LVPD…DDWF), 460 to 580 (QVLQ…QLSS), 627 to 751 (SVDA…DEWL), and 777 to 899 (LEEV…TLNS). Serine 324 bears the Phosphoserine; by CDK5 mark. The Ca(2+) site is built by lysine 344, aspartate 345, aspartate 357, aspartate 404, aspartate 406, aspartate 408, aspartate 410, and aspartate 411. Disordered regions lie at residues 617–641 (VDSE…TPDS), 813–833 (RKGT…TSHK), and 924–950 (SHSY…VTSS). Lysine 817 carries the N6-acetyllysine modification. Serine 820 and serine 941 each carry phosphoserine. A compositionally biased stretch (low complexity) spans 925–946 (HSYSHSSSSLSEEPELSGGPPH). Residue threonine 948 is modified to Phosphothreonine. 2 positions are modified to phosphoserine: serine 949 and serine 963. The C2 5 domain maps to 971 to 1093 (PLGQVKLTVW…DLSQGVARWY (123 aa)). A Phosphotyrosine modification is found at tyrosine 1009. The segment at 1018-1025 (KNRGTKRK) is required for phosphatidylinositol 4,5-bisphosphate-dependent location at the cell membrane. At serine 1034 the chain carries Phosphoserine.

It belongs to the extended synaptotagmin family. As to quaternary structure, interacts with ESYT2 and ESYT3. Interacts with ADGRD1; inhibiting the G-protein-coupled receptor activity of ADGRD1. Interaction with ADGRD1 is abolished when cytosolic calcium increases, relieving ADGRD1 G-protein-coupled receptor activity. Interacts (phosphorylated form) with SLC2A4. Phosphorylated on Ser residues in insulin-treated adipocytes (in vitro); this promotes interaction with SLC2A4.

Its subcellular location is the endoplasmic reticulum membrane. It is found in the cell membrane. In terms of biological role, binds calcium (via the C2 domains) and translocates to sites of contact between the endoplasmic reticulum and the cell membrane in response to increased cytosolic calcium levels. Helps tether the endoplasmic reticulum to the cell membrane and promotes the formation of appositions between the endoplasmic reticulum and the cell membrane. Acts as an inhibitor of ADGRD1 G-protein-coupled receptor activity in absence of cytosolic calcium. Binds glycerophospholipids in a barrel-like domain and may play a role in cellular lipid transport. The sequence is that of Extended synaptotagmin-1 (ESYT1) from Pongo abelii (Sumatran orangutan).